A 738-amino-acid polypeptide reads, in one-letter code: Coiled-coil domain-containing protein 142 (738 aa).

Residues 1–34 (MARASSSSGPLPPLANVPSSWAQPVGAGEERDEG) are disordered. The stretch at 69–92 (ALQRLRATLLRLHREREQLLRARD) forms a coiled coil. Residues 682–704 (LSTLGGGGRGGGGGGGPGPSPEA) are disordered. The segment covering 685 to 698 (LGGGGRGGGGGGGP) has biased composition (gly residues).

This Mus musculus (Mouse) protein is Coiled-coil domain-containing protein 142 (Ccdc142).